The following is a 389-amino-acid chain: Chromobox protein homolog 8 (389 aa).

The region spanning Phe-11–Pro-69 is the Chromo domain. 2 positions are modified to phosphoserine: Ser-110 and Ser-130. Positions Leu-124 to Phe-241 are disordered. Basic and acidic residues predominate over residues Glu-145–Pro-189. Residues Ser-191, Ser-256, Ser-265, Ser-311, Ser-332, and Ser-352 each carry the phosphoserine modification. The disordered stretch occupies residues Gly-298–Gln-327.

In terms of assembly, component of a PRC1-like complex. Interacts with RING1 RNF2, PCGF1, PCGF2, PCGF3, BMI1, PCGF5 and PCGF6. Interacts with MLLT3 and histone H3. Interacts with PHC2.

The protein resides in the nucleus. Functionally, component of a Polycomb group (PcG) multiprotein PRC1-like complex, a complex class required to maintain the transcriptionally repressive state of many genes, including Hox genes, throughout development. PcG PRC1 complex acts via chromatin remodeling and modification of histones; it mediates monoubiquitination of histone H2A 'Lys-119', rendering chromatin heritably changed in its expressibility. In Homo sapiens (Human), this protein is Chromobox protein homolog 8 (CBX8).